A 463-amino-acid chain; its full sequence is DNA polymerase subunit gamma-2, mitochondrial (463 aa).

The N-terminal 44 residues, 1 to 44 (MLLTLKNTGQLLVAACSKVARSLAKYHPRVNHHRHCVWCSKRGL), are a transit peptide targeting the mitochondrion.

In terms of assembly, heterotrimer composed of a catalytic subunit and a homodimer of accessory subunits.

It localises to the mitochondrion. Its function is as follows. Mitochondrial polymerase processivity subunit. It regulates the polymerase and exonuclease activities promoting processive DNA synthesis. Binds to ss-DNA. The sequence is that of DNA polymerase subunit gamma-2, mitochondrial (polg2) from Xenopus laevis (African clawed frog).